We begin with the raw amino-acid sequence, 384 residues long: Outer membrane protein assembly factor BamC (384 aa).

Residues 1 to 23 (MNKLNSVVVARGAVAVLLIGLAG) form the signal peptide. Cysteine 24 carries the N-palmitoyl cysteine lipid modification. Cysteine 24 carries S-diacylglycerol cysteine lipidation. 2 disordered regions span residues 47 to 70 (LEVP…TSGK) and 251 to 273 (QAAQ…SGTL).

Belongs to the BamC family. In terms of assembly, part of the Bam complex.

Its subcellular location is the cell outer membrane. Functionally, part of the outer membrane protein assembly complex, which is involved in assembly and insertion of beta-barrel proteins into the outer membrane. This is Outer membrane protein assembly factor BamC from Accumulibacter regalis.